The chain runs to 168 residues: Thiol peroxidase (168 aa).

The 150-residue stretch at 19 to 168 (PQAGSKAQAF…YDAALNVLKA (150 aa)) folds into the Thioredoxin domain. Residue C61 is the Cysteine sulfenic acid (-SOH) intermediate of the active site. Residues C61 and C95 are joined by a disulfide bond.

It belongs to the peroxiredoxin family. Tpx subfamily. In terms of assembly, homodimer.

It catalyses the reaction a hydroperoxide + [thioredoxin]-dithiol = an alcohol + [thioredoxin]-disulfide + H2O. Its function is as follows. Thiol-specific peroxidase that catalyzes the reduction of hydrogen peroxide and organic hydroperoxides to water and alcohols, respectively. Plays a role in cell protection against oxidative stress by detoxifying peroxides. This is Thiol peroxidase from Salmonella typhi.